The chain runs to 1172 residues: Ras guanine nucleotide exchange factor W (1172 aa).

2 stretches are compositionally biased toward low complexity: residues 34–70 and 78–87; these read PIYT…LNNL and NSNSVNNTIS. 3 disordered regions span residues 34 to 100, 138 to 162, and 186 to 246; these read PIYT…RSNT, KFLD…RIQQ, and FKRS…EIKD. Over residues 194-241 the composition is skewed to low complexity; that stretch reads QPPQSQSQQQQQLQLQQQQQQSMPNLSLGNNINSNNNNNNGSENNDIS. The next 6 helical transmembrane spans lie at 286-306, 320-340, 347-367, 378-400, 432-452, and 545-565; these read IWLT…DIIG, IMAV…LNLF, FPGT…VTDI, VLSI…ISLI, LTTN…QLLV, and ILHL…NLLI. Residues 666 to 702 are a coiled coil; sequence LLGMLNEIDDSLQAAKEKVEEESIQNSILKKDIEDLY. In terms of domain architecture, N-terminal Ras-GEF spans 765 to 903; it reads DLNVIQYATI…YIDSIHKRKM (139 aa). A Ras-GEF domain is found at 938-1170; that stretch reads DISDIAIQIT…WKMSLSCEQR (233 aa).

The protein resides in the membrane. Promotes the exchange of Ras-bound GDP by GTP. The chain is Ras guanine nucleotide exchange factor W (gefW) from Dictyostelium discoideum (Social amoeba).